Consider the following 143-residue polypeptide: Transcriptional regulator MraZ (143 aa).

SpoVT-AbrB domains are found at residues 5–47 (SHTP…PLAE) and 76–119 (ASDD…DSQR).

Belongs to the MraZ family. In terms of assembly, forms oligomers.

Its subcellular location is the cytoplasm. It is found in the nucleoid. This is Transcriptional regulator MraZ from Parafrankia sp. (strain EAN1pec).